Here is a 407-residue protein sequence, read N- to C-terminus: Semenogelin-2 (407 aa).

Positions 1 to 23 (MKSIILFVLSLVLILEKQAAVMG) are cleaved as a signal peptide. Disordered stretches follow at residues 25 to 60 (KDGS…TKSK), 133 to 158 (GQAH…LSSQ), 173 to 192 (KEQA…GSQS), and 272 to 407 (NLNQ…NKIS). Composition is skewed to polar residues over residues 31-40 (QLPSGSSQFP), 137-158 (CGTQ…LSSQ), and 174-192 (EQAS…GSQS). Positions 292 to 310 (RTEERQLNHGEKSVQKDVS) are enriched in basic and acidic residues. The segment covering 325-334 (KSQNQVTIHS) has biased composition (polar residues). Basic and acidic residues predominate over residues 335–345 (QDQEHGHKENK). Polar residues predominate over residues 372-397 (GSISIQTEEQIHGKSQNXVRIPSQAQ).

The protein belongs to the semenogelin family. Interacts with SERPINA5.

Its subcellular location is the secreted. Functionally, participates in the formation of a gel matrix (sperm coagulum) entrapping the accessory gland secretions and ejaculated spermatozoa. This Pan troglodytes (Chimpanzee) protein is Semenogelin-2 (SEMG2).